We begin with the raw amino-acid sequence, 66 residues long: Small ribosomal subunit protein bS21 (66 aa).

A disordered region spans residues 47–66; that stretch reads KAQEAARRKRKFARKRMYED. Over residues 53-66 the composition is skewed to basic residues; the sequence is RRKRKFARKRMYED.

The protein belongs to the bacterial ribosomal protein bS21 family.

In Rickettsia bellii (strain RML369-C), this protein is Small ribosomal subunit protein bS21.